We begin with the raw amino-acid sequence, 39 residues long: Photosystem II reaction center protein L (39 aa).

The helical transmembrane segment at 18 to 38 (SLYLGLLFVFVTGVLMSSYFF) threads the bilayer.

The protein belongs to the PsbL family. PSII is composed of 1 copy each of membrane proteins PsbA, PsbB, PsbC, PsbD, PsbE, PsbF, PsbH, PsbI, PsbJ, PsbK, PsbL, PsbM, PsbT, PsbX, PsbY, PsbZ, Psb30/Ycf12, peripheral proteins PsbO, CyanoQ (PsbQ), PsbU, PsbV and a large number of cofactors. It forms dimeric complexes.

The protein resides in the cellular thylakoid membrane. One of the components of the core complex of photosystem II (PSII). PSII is a light-driven water:plastoquinone oxidoreductase that uses light energy to abstract electrons from H(2)O, generating O(2) and a proton gradient subsequently used for ATP formation. It consists of a core antenna complex that captures photons, and an electron transfer chain that converts photonic excitation into a charge separation. This subunit is found at the monomer-monomer interface and is required for correct PSII assembly and/or dimerization. In Parasynechococcus marenigrum (strain WH8102), this protein is Photosystem II reaction center protein L.